The sequence spans 522 residues: Target of rapamycin complex 2 subunit MAPKAP1 (522 aa).

Residue Ala2 is modified to N-acetylalanine. An interaction with MAP3K2 region spans residues Ala2–His184. Residues Ala2–Lys267 form an interaction with NBN region. Thr86 bears the Phosphothreonine mark. 4 positions are modified to phosphoserine: Ser128, Ser186, Ser315, and Ser356. Positions Gln139–Lys267 constitute a CRIM domain. The segment at Leu279–Arg353 is SIN1-type RBD. Positions His382–Glu487 constitute an SIN1-type PH domain. Position 393 (Arg393) interacts with a 1,2-diacyl-sn-glycero-3-phospho-(1D-myo-inositol-3,4,5-trisphosphate). Thr398 bears the Phosphothreonine mark. 2 residues coordinate a 1,2-diacyl-sn-glycero-3-phospho-(1D-myo-inositol-3,4,5-trisphosphate): Lys428 and Lys464. An interaction with ATF2 region spans residues Phe468 to Gln522. Ser510 carries the post-translational modification Phosphoserine.

This sequence belongs to the SIN1 family. In terms of assembly, component of the mechanistic target of rapamycin complex 2 (mTORC2), consisting in two heterotretramers composed of MTOR, MLST8, RICTOR and MAPKAP1/SIN1. The mTORC2 core complex associates with PRR5/PROTOR1 and/or PRR5L/PROTOR2. Contrary to mTORC1, mTORC2 does not bind to and is not sensitive to FKBP12-rapamycin. Interacts with MAP3K2. Interacts with ATF2. Interacts with MAPK8. Interacts with GTP-bound HRAS and KRAS; inhibiting their activity. Interacts with IFNAR2. Post-translationally, phosphorylation at Ser-128 by PKC promotes relocalization to the perinuclear region, where the mTORC2 complex specifically mediates phosphorylation of SGK1. Phosphorylated at Thr-86 by AKT1 or RPS6KB1 in the presence of growth factors; the effect of this phosphorylation is however unclear. According to two studies, phosphorylation at Thr-86 by AKT1 is part of a positive feedback loop that increases mTORC2 activation. According to another study, phosphorylation at Thr-86 and Thr-398 by RPS6KB1 promotes dissociation from the mTORC2 complex, leading to inhibit mTORC2 signaling.

It is found in the cell membrane. Its subcellular location is the endoplasmic reticulum membrane. The protein localises to the early endosome membrane. The protein resides in the late endosome membrane. It localises to the lysosome membrane. It is found in the golgi apparatus membrane. Its subcellular location is the mitochondrion outer membrane. The protein localises to the cytoplasm. The protein resides in the perinuclear region. It localises to the nucleus. Its activity is regulated as follows. Phosphatidylinositol 3,4,5-trisphosphate (PI(3,4,5)P3) promotes MTOR activation by relieving MAPKAP1/SIN1-mediated inhibition of MTOR that takes place in absence of PI(3,4,5)P3. Its function is as follows. Component of the mechanistic target of rapamycin complex 2 (mTORC2), which transduces signals from growth factors to pathways involved in proliferation, cytoskeletal organization, lipogenesis and anabolic output. In response to growth factors, mTORC2 phosphorylates and activates AGC protein kinase family members, including AKT (AKT1, AKT2 and AKT3), PKC (PRKCA, PRKCB and PRKCE) and SGK1. In contrast to mTORC1, mTORC2 is nutrient-insensitive. Within the mTORC2 complex, MAPKAP1/SIN1 acts as a substrate adapter which recognizes and binds AGC protein kinase family members for phosphorylation by MTOR. mTORC2 plays a critical role in AKT1 activation by mediating phosphorylation of different sites depending on the context, such as 'Thr-450', 'Ser-473', 'Ser-477' or 'Thr-479', facilitating the phosphorylation of the activation loop of AKT1 on 'Thr-308' by PDPK1/PDK1 which is a prerequisite for full activation. mTORC2 catalyzes the phosphorylation of SGK1 at 'Ser-422' and of PRKCA on 'Ser-657'. The mTORC2 complex also phosphorylates various proteins involved in insulin signaling, such as FBXW8 and IGF2BP1. mTORC2 acts upstream of Rho GTPases to regulate the actin cytoskeleton, probably by activating one or more Rho-type guanine nucleotide exchange factors. mTORC2 promotes the serum-induced formation of stress-fibers or F-actin. MAPKAP1 inhibits MAP3K2 by preventing its dimerization and autophosphorylation. Inhibits HRAS and KRAS independently of mTORC2 complex. Enhances osmotic stress-induced phosphorylation of ATF2 and ATF2-mediated transcription. Involved in ciliogenesis, regulates cilia length through its interaction with CCDC28B independently of mTORC2 complex. The chain is Target of rapamycin complex 2 subunit MAPKAP1 (MAPKAP1) from Pongo abelii (Sumatran orangutan).